Reading from the N-terminus, the 339-residue chain is Cathepsin B (339 aa).

The first 17 residues, 1 to 17 (MWQLWASLCCLLALADA), serve as a signal peptide directing secretion. The propeptide at 18 to 79 (RSRPSFHPLS…QRVMFTEDLK (62 aa)) is activation peptide. 6 disulfide bridges follow: C93–C122, C105–C150, C141–C207, C142–C146, C179–C211, and C187–C198. Residue C108 is part of the active site. N-linked (GlcNAc...) asparagine glycosylation occurs at N192. K220 bears the N6-acetyllysine mark. Catalysis depends on residues H278 and N298. A propeptide spanning residues 334-339 (QYWEKI) is cleaved from the precursor.

Belongs to the peptidase C1 family. As to quaternary structure, dimer of a heavy chain and a light chain cross-linked by a disulfide bond. Interacts with SRPX2. Directly interacts with SHKBP1.

The protein resides in the lysosome. It is found in the melanosome. Its subcellular location is the secreted. The protein localises to the extracellular space. It localises to the apical cell membrane. The catalysed reaction is Hydrolysis of proteins with broad specificity for peptide bonds. Preferentially cleaves -Arg-Arg-|-Xaa bonds in small molecule substrates (thus differing from cathepsin L). In addition to being an endopeptidase, shows peptidyl-dipeptidase activity, liberating C-terminal dipeptides.. Thiol protease which is believed to participate in intracellular degradation and turnover of proteins. Cleaves matrix extracellular phosphoglycoprotein MEPE. Involved in the solubilization of cross-linked TG/thyroglobulin in the thyroid follicle lumen. Has also been implicated in tumor invasion and metastasis. This Pongo abelii (Sumatran orangutan) protein is Cathepsin B (CTSB).